The following is a 161-amino-acid chain: Nucleotide-binding protein Rmet_2899 (161 aa).

It belongs to the YajQ family.

Functionally, nucleotide-binding protein. The chain is Nucleotide-binding protein Rmet_2899 from Cupriavidus metallidurans (strain ATCC 43123 / DSM 2839 / NBRC 102507 / CH34) (Ralstonia metallidurans).